Consider the following 96-residue polypeptide: uncharacterized protein (96 aa).

This is an uncharacterized protein from Invertebrate iridescent virus 6 (IIV-6).